The following is a 616-amino-acid chain: Proline--tRNA ligase (616 aa).

The protein belongs to the class-II aminoacyl-tRNA synthetase family. ProS type 1 subfamily. In terms of assembly, homodimer.

The protein localises to the cytoplasm. It carries out the reaction tRNA(Pro) + L-proline + ATP = L-prolyl-tRNA(Pro) + AMP + diphosphate. Its function is as follows. Catalyzes the attachment of proline to tRNA(Pro) in a two-step reaction: proline is first activated by ATP to form Pro-AMP and then transferred to the acceptor end of tRNA(Pro). As ProRS can inadvertently accommodate and process non-cognate amino acids such as alanine and cysteine, to avoid such errors it has two additional distinct editing activities against alanine. One activity is designated as 'pretransfer' editing and involves the tRNA(Pro)-independent hydrolysis of activated Ala-AMP. The other activity is designated 'posttransfer' editing and involves deacylation of mischarged Ala-tRNA(Pro). The misacylated Cys-tRNA(Pro) is not edited by ProRS. The sequence is that of Proline--tRNA ligase from Lactococcus lactis subsp. lactis (strain IL1403) (Streptococcus lactis).